A 126-amino-acid polypeptide reads, in one-letter code: MTAIDVMWVGLGGGIGSLLRWWIGLSIGKVYKGNFPLGTFLINISGAFVIGYLSILFSVDWRDRYGDLMNTAVLTGILGGYTTFSSMQLDAAKLATARGRAIAAGYLIISVLVGLAAAAFGAWLAY.

The next 4 helical transmembrane spans lie at 7–27, 37–57, 68–87, and 101–121; these read MWVG…GLSI, LGTF…SILF, LMNT…FSSM, and AIAA…AAFG. Na(+) contacts are provided by glycine 79 and threonine 82.

This sequence belongs to the fluoride channel Fluc/FEX (TC 1.A.43) family.

It is found in the cell inner membrane. It catalyses the reaction fluoride(in) = fluoride(out). Na(+) is not transported, but it plays an essential structural role and its presence is essential for fluoride channel function. In terms of biological role, fluoride-specific ion channel. Important for reducing fluoride concentration in the cell, thus reducing its toxicity. The chain is Fluoride-specific ion channel FluC 3 from Yersinia pestis.